The sequence spans 488 residues: Dipeptide and tripeptide permease A (488 aa).

The Cytoplasmic segment spans residues 1 to 35; the sequence is MSTANTPEDEQKPSLNAFKQPRAFYLIFSIELWER. A helical transmembrane segment spans residues 36–56; the sequence is FGYYGLQGIMAVYLVKMLGMS. Residues 57–60 lie on the Periplasmic side of the membrane; it reads EAEA. A helical membrane pass occupies residues 61 to 81; sequence ITVFAAFTALVYGFVAIGGWL. Residues 82–90 lie on the Cytoplasmic side of the membrane; it reads GDKILGTKR. A helical transmembrane segment spans residues 91-111; sequence VIVLGAIVLAIGYAMVAFSDH. Over 112-114 the chain is Periplasmic; that stretch reads DKD. Residues 115–135 form a helical membrane-spanning segment; it reads MIYWGLATIAVGNGLFKANPS. Residues 136–154 are Cytoplasmic-facing; that stretch reads SLLATCYEKDDPQLDGAFT. A helical membrane pass occupies residues 155-175; sequence MYYMSINVGSFLSMLATPWLA. Topologically, residues 176 to 179 are periplasmic; that stretch reads ANYG. The helical transmembrane segment at 180 to 200 threads the bilayer; sequence WDVAFALSVVGMLITLANFML. At 201–219 the chain is on the cytoplasmic side; it reads CRGWIKDKGSRPDFEPLNY. Residues 220 to 240 form a helical membrane-spanning segment; that stretch reads LKLLLTLVGIVALTAVSTWLL. H241 is a topological domain (periplasmic). The chain crosses the membrane as a helical span at residues 242 to 262; it reads NNEVATWSLAIISLGIILIFA. Topologically, residues 263-275 are cytoplasmic; the sequence is RETFMMKGVARRK. A helical membrane pass occupies residues 276-296; it reads MIVAFLLMVEAVVFFVLYDQM. The Periplasmic portion of the chain corresponds to 297 to 324; that stretch reads PTSLNFFAIHNVEHAILGFSVEPEQFQS. Residues 325-345 traverse the membrane as a helical segment; the sequence is LNPFWIMLASPLLAAIYNFMG. The Cytoplasmic portion of the chain corresponds to 346-353; sequence DKLPMPYK. Residues 354–374 traverse the membrane as a helical segment; that stretch reads FTVGMFLSATAFLVLPLGASM. The Periplasmic segment spans residues 375–391; the sequence is ANEAGIVSSWWLVASYG. A helical transmembrane segment spans residues 392 to 412; it reads FQSIGELMISGLGLAMVAQLV. Topologically, residues 413–415 are cytoplasmic; that stretch reads PQR. The chain crosses the membrane as a helical span at residues 416-436; the sequence is LMGFIMGAWFLTSAAAAIIAG. Residues 437–460 are Periplasmic-facing; that stretch reads KVASLMAVPEDVQNAHASLEIYSS. A helical transmembrane segment spans residues 461–481; it reads VFLQIGIVTGVIALLMLFTAP. At 482-488 the chain is on the cytoplasmic side; it reads MLSKMTQ.

The protein belongs to the major facilitator superfamily. Proton-dependent oligopeptide transporter (POT/PTR) (TC 2.A.17) family. DtpA subfamily.

The protein localises to the cell inner membrane. Its function is as follows. Proton-dependent permease that transports di- and tripeptides. This is Dipeptide and tripeptide permease A from Proteus mirabilis (strain HI4320).